Reading from the N-terminus, the 449-residue chain is MARRARRPRGRFYSFRRGRWHHLKRLRRRYKFRHRRRQRYRRRAFRKAFHNPRPGTYSVRLPNPQSTMTIRFQGVIFLTEGLILPKNSTAGGYADHMYGARVAKISVNLKEFLLASMNLTYVSKIGGPIAGELIADGSKSQAADNWPNCWLPLDNNVPSATPSAWWRWALMMMQPTDSCRFFNHPKQMTLQDMGRMFGGWHLFRHIETRFQLLATKNEGSFSPVASLLSQGEYLTRRDDVKYSSDHQNRWQKGGQPMTGGIAYATGKMRPDEQQYPAMPPDPPIITATTAQGTQVRCMNSTQAWWSWDTYMSFATLTALGAQWSFPPGQRSVSRRSFNHHKARGAGDPKGQRWHTLVPLGTETITDSYMSAPASELDTNFFTLYVAQGTNKSQQYKFGTATYALKEPVMKSDAWAVVRVQSVWQLGNRQRPYPWDVNWANSTMYWGTQP.

Residues 1–43 are DNA-binding; sequence MARRARRPRGRFYSFRRGRWHHLKRLRRRYKFRHRRRQRYRRR. Residues 6–47 are nuclear localization signals; it reads RRPRGRFYSFRRGRWHHLKRLRRRYKFRHRRRQRYRRRAFRK.

Belongs to the gyrovirus capsid protein family. As to quaternary structure, homomultimer (Potential). Interacts with Rep; this interaction relocates Rep into the nucleus.

Its subcellular location is the host nucleus. It localises to the virion. Functionally, self-assembles to form the virion icosahedral capsid with a T=1 symmetry. This very small capsid (25 nm in diameter) allows the virus to be very stable in the environment and resistant to some disinfectants, including detergents. Essential for the initial attachment to host receptors. After attachment, the virus is endocytosed and traffics to the nucleus. The capsid protein binds and transports the viral genome and Rep across the nuclear envelope. The sequence is that of Capsid protein (VP1) from Gallus gallus (Chicken).